The primary structure comprises 450 residues: Divalent metal cation transporter MntH (450 aa).

11 helical membrane-spanning segments follow: residues 44–64 (LLAF…PGNW), 77–97 (TLLS…SLAA), 121–141 (FLLW…EVIG), 152–172 (IPLI…LLLM), 181–201 (AFVI…IVAA), 218–238 (IFTN…TVMP), 273–293 (IALM…AATF), 310–330 (LLSP…ALLA), 366–386 (GIAI…GTAD), 387–407 (LLVF…IPLV), and 419–439 (FAIS…IVVL).

This sequence belongs to the NRAMP family.

The protein localises to the cell inner membrane. H(+)-stimulated, divalent metal cation uptake system. In Bradyrhizobium diazoefficiens (strain JCM 10833 / BCRC 13528 / IAM 13628 / NBRC 14792 / USDA 110), this protein is Divalent metal cation transporter MntH.